The sequence spans 273 residues: Histone H1.2 (273 aa).

The segment at 1–63 (MSIEEENVPT…TKKKTTSSHP (63 aa)) is disordered. Ser-2 is modified (N-acetylserine). A Phosphoserine modification is found at Ser-14. The segment covering 33–59 (GKSKKTTTAKATKKPVKAAAPTKKKTT) has biased composition (basic residues). The H15 domain maps to 61 to 130 (SHPTYEEMIK…KVKASFKIPS (70 aa)). Glycyl lysine isopeptide (Lys-Gly) (interchain with G-Cter in ubiquitin) cross-links involve residues Lys-156 and Lys-165. Composition is skewed to low complexity over residues 193–216 (KVTA…VAAK) and 237–256 (KKVA…PAKS). The segment at 193–273 (KVTAAKPKSK…KRASTRKAKK (81 aa)) is disordered. Over residues 257–273 (VKVKSPAKRASTRKAKK) the composition is skewed to basic residues.

It belongs to the histone H1/H5 family.

It is found in the nucleus. The protein resides in the chromosome. Its function is as follows. Histones H1 are necessary for the condensation of nucleosome chains into higher-order structures. This Arabidopsis thaliana (Mouse-ear cress) protein is Histone H1.2.